The sequence spans 398 residues: 1-deoxy-D-xylulose 5-phosphate reductoisomerase (398 aa).

NADPH is bound by residues Thr11, Gly12, Ser13, Ile14, and Asn125. Lys126 is a 1-deoxy-D-xylulose 5-phosphate binding site. Position 127 (Glu127) interacts with NADPH. A Mn(2+)-binding site is contributed by Asp151. 1-deoxy-D-xylulose 5-phosphate contacts are provided by Ser152, Glu153, Ser186, and His209. Glu153 serves as a coordination point for Mn(2+). An NADPH-binding site is contributed by Gly215. Positions 222, 227, 228, and 231 each coordinate 1-deoxy-D-xylulose 5-phosphate. Residue Glu231 coordinates Mn(2+).

The protein belongs to the DXR family. Requires Mg(2+) as cofactor. Mn(2+) is required as a cofactor.

It catalyses the reaction 2-C-methyl-D-erythritol 4-phosphate + NADP(+) = 1-deoxy-D-xylulose 5-phosphate + NADPH + H(+). Its pathway is isoprenoid biosynthesis; isopentenyl diphosphate biosynthesis via DXP pathway; isopentenyl diphosphate from 1-deoxy-D-xylulose 5-phosphate: step 1/6. Catalyzes the NADPH-dependent rearrangement and reduction of 1-deoxy-D-xylulose-5-phosphate (DXP) to 2-C-methyl-D-erythritol 4-phosphate (MEP). This is 1-deoxy-D-xylulose 5-phosphate reductoisomerase from Acinetobacter baumannii (strain ACICU).